Consider the following 128-residue polypeptide: 3-aminoacrylate deaminase RutC (128 aa).

This sequence belongs to the RutC family.

It catalyses the reaction (Z)-3-aminoacrylate + H2O + H(+) = 3-oxopropanoate + NH4(+). In terms of biological role, involved in pyrimidine catabolism. Catalyzes the deamination of 3-aminoacrylate to malonic semialdehyde, a reaction that can also occur spontaneously. RutC may facilitate the reaction and modulate the metabolic fitness, rather than catalyzing essential functions. This is 3-aminoacrylate deaminase RutC from Enterobacter sp. (strain 638).